We begin with the raw amino-acid sequence, 137 residues long: Large ribosomal subunit protein uL22c (137 aa).

Belongs to the universal ribosomal protein uL22 family. As to quaternary structure, part of the 50S ribosomal subunit.

The protein resides in the plastid. It localises to the chloroplast. Its function is as follows. This protein binds specifically to 23S rRNA. In terms of biological role, the globular domain of the protein is located near the polypeptide exit tunnel on the outside of the subunit, while an extended beta-hairpin is found that lines the wall of the exit tunnel in the center of the 70S ribosome. In Oenothera argillicola (Appalachian evening primrose), this protein is Large ribosomal subunit protein uL22c (rpl22).